Here is a 419-residue protein sequence, read N- to C-terminus: rRNA methyltransferase 3, mitochondrial (419 aa).

A mitochondrion-targeting transit peptide spans 1–39; sequence MAALCGGMLRGCILKPLGLSGSLQLKRNVRALRRTPVRV. The interval 42–68 is disordered; sequence ADEEGRERKQVEASRQRQPRQNESQAC. The segment covering 44–56 has biased composition (basic and acidic residues); sequence EEGRERKQVEASR. S-adenosyl-L-methionine contacts are provided by Gly357, Ile381, and Leu390.

This sequence belongs to the class IV-like SAM-binding methyltransferase superfamily. RNA methyltransferase TrmH family.

The protein localises to the mitochondrion. The enzyme catalyses a uridine in rRNA + S-adenosyl-L-methionine = a 2'-O-methyluridine in rRNA + S-adenosyl-L-homocysteine + H(+). S-adenosyl-L-methionine-dependent 2'-O-ribose methyltransferase that catalyzes the formation of 2'-O-methylguanosine at position 1370 (Gm1370) in the mitochondrial large subunit ribosomal RNA (mtLSU rRNA), a conserved modification in the peptidyl transferase domain of the mtLSU rRNA. Also required for formation of 2'-O-methyluridine at position 1369 (Um1369) mediated by MRM2. The polypeptide is rRNA methyltransferase 3, mitochondrial (Xenopus laevis (African clawed frog)).